The following is a 276-amino-acid chain: Bis(5'-nucleosyl)-tetraphosphatase, symmetrical (276 aa).

This sequence belongs to the Ap4A hydrolase family.

The catalysed reaction is P(1),P(4)-bis(5'-adenosyl) tetraphosphate + H2O = 2 ADP + 2 H(+). Hydrolyzes diadenosine 5',5'''-P1,P4-tetraphosphate to yield ADP. This chain is Bis(5'-nucleosyl)-tetraphosphatase, symmetrical, found in Dechloromonas aromatica (strain RCB).